An 81-amino-acid polypeptide reads, in one-letter code: RNA-binding protein KhpA (81 aa).

The KH domain maps to 34–81 (KIALRLSVHKSDTGKVIGKQGRTAKAIRTAVFAAGVQSSKKVQFEIFD).

The protein belongs to the KhpA RNA-binding protein family. In terms of assembly, forms a complex with KhpB.

It is found in the cytoplasm. Functionally, a probable RNA chaperone. Forms a complex with KhpB which binds to cellular RNA and controls its expression. Plays a role in peptidoglycan (PG) homeostasis and cell length regulation. In Bacillus subtilis (strain 168), this protein is RNA-binding protein KhpA.